A 776-amino-acid polypeptide reads, in one-letter code: DNA ligase (776 aa).

Residues Asp-31–Asp-35, Ser-80–Leu-81, and Glu-112 each bind NAD(+). The N6-AMP-lysine intermediate role is filled by Lys-114. Residues Arg-135, Glu-172, Lys-288, and Lys-312 each coordinate NAD(+). 4 residues coordinate Zn(2+): Cys-406, Cys-409, Cys-436, and Cys-442. Positions Ala-693–Val-776 constitute a BRCT domain.

This sequence belongs to the NAD-dependent DNA ligase family. LigA subfamily. It depends on Mg(2+) as a cofactor. The cofactor is Mn(2+).

It catalyses the reaction NAD(+) + (deoxyribonucleotide)n-3'-hydroxyl + 5'-phospho-(deoxyribonucleotide)m = (deoxyribonucleotide)n+m + AMP + beta-nicotinamide D-nucleotide.. In terms of biological role, DNA ligase that catalyzes the formation of phosphodiester linkages between 5'-phosphoryl and 3'-hydroxyl groups in double-stranded DNA using NAD as a coenzyme and as the energy source for the reaction. It is essential for DNA replication and repair of damaged DNA. This Pseudomonas putida (strain ATCC 700007 / DSM 6899 / JCM 31910 / BCRC 17059 / LMG 24140 / F1) protein is DNA ligase.